Here is a 569-residue protein sequence, read N- to C-terminus: Urease subunit alpha (569 aa).

Positions 131–569 constitute a Urease domain; it reads GGIDTHIHFI…LPLAQRYLLL (439 aa). 3 residues coordinate Ni(2+): His136, His138, and Lys219. N6-carboxylysine is present on Lys219. His221 is a binding site for substrate. Residues His248 and His274 each coordinate Ni(2+). His322 (proton donor) is an active-site residue. Asp362 is a binding site for Ni(2+).

This sequence belongs to the metallo-dependent hydrolases superfamily. Urease alpha subunit family. In terms of assembly, heterotrimer of UreA (gamma), UreB (beta) and UreC (alpha) subunits. Three heterotrimers associate to form the active enzyme. Ni cation serves as cofactor. In terms of processing, carboxylation allows a single lysine to coordinate two nickel ions.

It is found in the cytoplasm. The enzyme catalyses urea + 2 H2O + H(+) = hydrogencarbonate + 2 NH4(+). It participates in nitrogen metabolism; urea degradation; CO(2) and NH(3) from urea (urease route): step 1/1. This Parasynechococcus marenigrum (strain WH8102) protein is Urease subunit alpha.